Here is a 301-residue protein sequence, read N- to C-terminus: Recombination-associated protein RdgC (301 aa).

The protein belongs to the RdgC family.

It is found in the cytoplasm. The protein localises to the nucleoid. Its function is as follows. May be involved in recombination. The polypeptide is Recombination-associated protein RdgC (Pseudoalteromonas atlantica (strain T6c / ATCC BAA-1087)).